The following is a 372-amino-acid chain: ATP-sensitive inward rectifier potassium channel 1 (372 aa).

The Cytoplasmic segment spans residues 1-58 (MFKHLRRWFVTHIFGRSRQRARLVSKDGRCNIEFGNVDAQSRFIFFVDIWTTVLDLKW). Residue Ser-25 is modified to Phosphoserine; by SGK1. A helical membrane pass occupies residues 59 to 83 (RYKMTVFITAFLGSWFLFGLLWYVV). The Extracellular portion of the chain corresponds to 84 to 108 (AYVHKDLPEFYPPDNRTPCVENING). An N-linked (GlcNAc...) asparagine glycan is attached at Asn-98. An intramembrane region (helical; Pore-forming) is located at residues 109-120 (MTSAFLFSLETQ). Residues 121–127 (VTIGYGF) constitute an intramembrane region (pore-forming). Positions 122-127 (TIGYGF) match the Selectivity filter motif. Over 128 to 136 (RFVTEQCAT) the chain is Extracellular. The chain crosses the membrane as a helical span at residues 137 to 158 (AIFLLIFQSILGVIINSFMCGA). Residues 159–372 (ILAKISRPKK…EVDETDDTQM (214 aa)) lie on the Cytoplasmic side of the membrane. A polyphosphoinositide (PIP2)-binding region spans residues 161–188 (AKISRPKKRAKTITFSKNAVISKRGGKL). 204 to 211 (GSHIYGKL) is a binding site for ATP.

Belongs to the inward rectifier-type potassium channel (TC 1.A.2.1) family. KCNJ1 subfamily. As to quaternary structure, interacts with SGK1 and SLC9A3R2/NHERF2. In terms of processing, phosphorylation at Ser-25 by SGK1 is necessary for its expression at the cell membrane.

The protein resides in the cell membrane. It carries out the reaction K(+)(in) = K(+)(out). With respect to regulation, inhibited by WNK3. Activated by phosphatidylinositol 4,5 biphosphate (PtdIns(4,5)P2). Its function is as follows. Inward rectifier potassium channels are characterized by a greater tendency to allow potassium to flow into the cell rather than out of it. Their voltage dependence is regulated by the concentration of extracellular potassium; as external potassium is raised, the voltage range of the channel opening shifts to more positive voltages. The inward rectification is mainly due to the blockage of outward current by internal magnesium. This channel is activated by internal ATP and can be blocked by external barium. In the kidney, probably plays a major role in potassium homeostasis. This Mus musculus (Mouse) protein is ATP-sensitive inward rectifier potassium channel 1 (Kcnj1).